We begin with the raw amino-acid sequence, 99 residues long: Single insulin-like growth factor-binding domain protein-2 (99 aa).

An N-terminal signal peptide occupies residues 1 to 18 (MESLFIFAFGMMLSSASA). Residues 19–98 (LSCIPCVPEE…GQEVGRCRKK (80 aa)) form the IGFBP N-terminal domain. O-linked (GalNAc...) serine glycosylation is present at Ser20. 6 cysteine pairs are disulfide-bonded: Cys21–Cys44, Cys24–Cys46, Cys29–Cys47, Cys35–Cys50, Cys58–Cys74, and Cys68–Cys95.

As to expression, expressed in hemocytes.

The protein resides in the secreted. Its function is as follows. Has a role in the innate immune system. In Cupiennius salei (American wandering spider), this protein is Single insulin-like growth factor-binding domain protein-2.